The chain runs to 175 residues: Large ribosomal subunit protein uL6 (175 aa).

The protein belongs to the universal ribosomal protein uL6 family. Part of the 50S ribosomal subunit.

Its function is as follows. This protein binds to the 23S rRNA, and is important in its secondary structure. It is located near the subunit interface in the base of the L7/L12 stalk, and near the tRNA binding site of the peptidyltransferase center. This Xanthomonas oryzae pv. oryzae (strain MAFF 311018) protein is Large ribosomal subunit protein uL6.